A 231-amino-acid polypeptide reads, in one-letter code: Uracil-DNA glycosylase (231 aa).

Aspartate 74 serves as the catalytic Proton acceptor.

It belongs to the uracil-DNA glycosylase (UDG) superfamily. UNG family.

It localises to the cytoplasm. The enzyme catalyses Hydrolyzes single-stranded DNA or mismatched double-stranded DNA and polynucleotides, releasing free uracil.. Functionally, excises uracil residues from the DNA which can arise as a result of misincorporation of dUMP residues by DNA polymerase or due to deamination of cytosine. In Campylobacter jejuni subsp. doylei (strain ATCC BAA-1458 / RM4099 / 269.97), this protein is Uracil-DNA glycosylase.